Reading from the N-terminus, the 177-residue chain is Disulfide bond formation protein B (177 aa).

Topologically, residues 1-14 (MLALLKQFSEKRFV) are cytoplasmic. A helical transmembrane segment spans residues 15 to 31 (WFLLAFSSLALESTALY). Over 32 to 49 (FQYGMGLQPCVLCVYERL) the chain is Periplasmic. Cysteines 41 and 44 form a disulfide. The chain crosses the membrane as a helical span at residues 50–65 (AMIGLFVAGIIALLQP). The Cytoplasmic portion of the chain corresponds to 66–72 (LAFILRL). The chain crosses the membrane as a helical span at residues 73–90 (IALALGLFSSIKGLLISF). Residues 91-145 (RHLDLQMNPAPWKQCEFIPNFPETLPFHQWFPFIFNPTGSCNESQWSLFGLTMVQ) are Periplasmic-facing. C105 and C131 are disulfide-bonded. Residues 146-164 (WLVVIFSLYVVILTLLLIA) form a helical membrane-spanning segment. Residues 165–177 (QVIKTRKQRRLFN) are Cytoplasmic-facing.

Belongs to the DsbB family.

The protein localises to the cell inner membrane. In terms of biological role, required for disulfide bond formation in some periplasmic proteins. Acts by oxidizing the DsbA protein. The protein is Disulfide bond formation protein B of Haemophilus influenzae (strain 86-028NP).